Consider the following 337-residue polypeptide: Biotin synthase (337 aa).

In terms of domain architecture, Radical SAM core spans 55 to 284 (YFKNTIELCS…KKTILLAGGK (230 aa)). Positions 73, 77, and 80 each coordinate [4Fe-4S] cluster. Positions 117, 149, and 209 each coordinate [2Fe-2S] cluster.

Belongs to the radical SAM superfamily. Biotin synthase family. As to quaternary structure, homodimer. Requires [4Fe-4S] cluster as cofactor. [2Fe-2S] cluster serves as cofactor.

It catalyses the reaction (4R,5S)-dethiobiotin + (sulfur carrier)-SH + 2 reduced [2Fe-2S]-[ferredoxin] + 2 S-adenosyl-L-methionine = (sulfur carrier)-H + biotin + 2 5'-deoxyadenosine + 2 L-methionine + 2 oxidized [2Fe-2S]-[ferredoxin]. It functions in the pathway cofactor biosynthesis; biotin biosynthesis; biotin from 7,8-diaminononanoate: step 2/2. Catalyzes the conversion of dethiobiotin (DTB) to biotin by the insertion of a sulfur atom into dethiobiotin via a radical-based mechanism. The sequence is that of Biotin synthase from Caldicellulosiruptor bescii (strain ATCC BAA-1888 / DSM 6725 / KCTC 15123 / Z-1320) (Anaerocellum thermophilum).